Consider the following 461-residue polypeptide: Serine/threonine-protein kinase ppk24, mitochondrial (461 aa).

The Protein kinase domain occupies 120 to 416 (FQHLKSIAKG…LDSILGTAWV (297 aa)). Residues 126–134 (IAKGATSTI) and Lys153 contribute to the ATP site. Asp256 (proton acceptor) is an active-site residue.

The protein belongs to the protein kinase superfamily. Ser/Thr protein kinase family.

It localises to the mitochondrion. It carries out the reaction L-seryl-[protein] + ATP = O-phospho-L-seryl-[protein] + ADP + H(+). The enzyme catalyses L-threonyl-[protein] + ATP = O-phospho-L-threonyl-[protein] + ADP + H(+). In terms of biological role, has a role late in meiosis. The sequence is that of Serine/threonine-protein kinase ppk24, mitochondrial (ppk24) from Schizosaccharomyces pombe (strain 972 / ATCC 24843) (Fission yeast).